Consider the following 613-residue polypeptide: Myrcene synthase, chloroplastic (613 aa).

The transit peptide at 1–46 directs the protein to the chloroplast; it reads MQCMAVHQFAPLLSLLNCSRISSDFGRLFTPKTSTKSRSSTCHPIQ. R324, D361, and D365 together coordinate (2E)-geranyl diphosphate. D361 and D365 together coordinate Mg(2+). The DDXXD motif signature appears at 361-365; the sequence is DDIYD. Residues 455-475 traverse the membrane as a helical segment; that stretch reads IEMAWLSIGGPVILVHAYFCF. The (2E)-geranyl diphosphate site is built by R503 and D506. 3 residues coordinate Mg(2+): D506, T510, and E514.

The protein belongs to the terpene synthase family. Tpsb subfamily. It depends on Mg(2+) as a cofactor. Mn(2+) is required as a cofactor. Expressed in trichomes.

Its subcellular location is the plastid. The protein localises to the chloroplast membrane. It catalyses the reaction (2E)-geranyl diphosphate = beta-myrcene + diphosphate. It functions in the pathway secondary metabolite biosynthesis; terpenoid biosynthesis. Functionally, monoterpene synthase that catalyzes the formation of myrcene. Can use geranyl diphosphate as substrate, but not farnesyl diphosphate or geranylgeranyl diphosphate. This Humulus lupulus (European hop) protein is Myrcene synthase, chloroplastic.